Reading from the N-terminus, the 186-residue chain is Protein GrpE (186 aa).

Composition is skewed to basic and acidic residues over residues 1–13 (MSDNKTELNEEQH) and 23–34 (EETHQAEDAVEH). Positions 1-34 (MSDNKTELNEEQHNATAEGEVSEETHQAEDAVEH) are disordered.

Belongs to the GrpE family. As to quaternary structure, homodimer.

The protein localises to the cytoplasm. Its function is as follows. Participates actively in the response to hyperosmotic and heat shock by preventing the aggregation of stress-denatured proteins, in association with DnaK and GrpE. It is the nucleotide exchange factor for DnaK and may function as a thermosensor. Unfolded proteins bind initially to DnaJ; upon interaction with the DnaJ-bound protein, DnaK hydrolyzes its bound ATP, resulting in the formation of a stable complex. GrpE releases ADP from DnaK; ATP binding to DnaK triggers the release of the substrate protein, thus completing the reaction cycle. Several rounds of ATP-dependent interactions between DnaJ, DnaK and GrpE are required for fully efficient folding. This Hydrogenovibrio crunogenus (strain DSM 25203 / XCL-2) (Thiomicrospira crunogena) protein is Protein GrpE.